We begin with the raw amino-acid sequence, 228 residues long: Death domain-containing membrane protein NRADD (228 aa).

The Extracellular portion of the chain corresponds to 1–52 (MLHNVSKGVVYSDTALKGQDGDREGMWVGAGGALAPNTSSLFPPEPPGASSN). 2 N-linked (GlcNAc...) asparagine glycosylation sites follow: asparagine 4 and asparagine 37. A helical; Signal-anchor for type III membrane protein membrane pass occupies residues 53–73 (IIPVYCALLATVVLGLLAYVA). Topologically, residues 74–228 (FKCWRSRKQR…SSPAEGCSVV (155 aa)) are cytoplasmic. Positions 143 to 222 (EEVQRLLILG…DVVQVLSSPA (80 aa)) constitute a Death domain.

Interacts with NTRK1. Isoform 1 and isoform 2 interact with NGFR. Interacts with SORT1. In terms of processing, isoform 1 is N-glycosylated. Isoform 2 is not N-glycosylated. As to expression, detected in embryo, including embryonic brain. Detected at very low levels in adult testis, spleen, thymus and lung.

The protein resides in the cell membrane. Its subcellular location is the nucleus. Functionally, modulates NTRK1 signaling. Can activate several intracellular signaling pathways, leading to activation of JUN. Promotes translocation of SORT1 to the cell membrane, and thereby hinders lysosomal degradation of SOTR1 and promotes its interaction with NGFR. Both isoform 1 and isoform 2 promote apoptosis. This is Death domain-containing membrane protein NRADD (Nradd) from Rattus norvegicus (Rat).